We begin with the raw amino-acid sequence, 442 residues long: DNA topoisomerase medium subunit (442 aa).

Residues 29-438 (IPNMIDGFKP…DVVTEYTKDL (410 aa)) form the Topo IIA-type catalytic domain. Residue Tyr-117 is the O-(5'-phospho-DNA)-tyrosine intermediate of the active site.

It belongs to the type II topoisomerase family. Part of the DNA topoisomerase complex made of gp39, gp52 and gp60. It depends on Mg(2+) as a cofactor.

The catalysed reaction is ATP-dependent breakage, passage and rejoining of double-stranded DNA.. Medium subunit of the DNA topoisomerase that untwists superhelical DNA. Controls topological states of double-stranded DNA by transient breakage and subsequent rejoining of DNA strands. This Enterobacteria phage T4 (Bacteriophage T4) protein is DNA topoisomerase medium subunit (52).